The sequence spans 279 residues: Tryptophan synthase alpha chain (279 aa).

Residues Glu49 and Asp60 each act as proton acceptor in the active site.

The protein belongs to the TrpA family. As to quaternary structure, tetramer of two alpha and two beta chains.

It catalyses the reaction (1S,2R)-1-C-(indol-3-yl)glycerol 3-phosphate + L-serine = D-glyceraldehyde 3-phosphate + L-tryptophan + H2O. It functions in the pathway amino-acid biosynthesis; L-tryptophan biosynthesis; L-tryptophan from chorismate: step 5/5. Functionally, the alpha subunit is responsible for the aldol cleavage of indoleglycerol phosphate to indole and glyceraldehyde 3-phosphate. The chain is Tryptophan synthase alpha chain from Nitrosospira multiformis (strain ATCC 25196 / NCIMB 11849 / C 71).